We begin with the raw amino-acid sequence, 240 residues long: CRISPR system aCascade subunit Cas5 1 (240 aa).

This sequence belongs to the CRISPR-associated protein Cas5 family. Subtype I-A/Apern subfamily. Part of the aCascade ribonucleoprotein complex, minimally composed of Csa2 and Cas5a, which binds crRNA. Other possible components of aCascade in strain P1 are Cas6b (SSO1437) and Csa5 (SSO1443), while SSO1399, Cas5b (SSO1400) and SSO1401 have sometimes been seen weakly associated. Csa2 is probably the major RNA-binding subunit. The Csa2-Cas5a-crRNA complex also binds target DNA homologous to crRNA, probably forming an R-loop. Purified aCascade forms a filament about 6 nm in width.

Functionally, CRISPR (clustered regularly interspaced short palindromic repeat) is an adaptive immune system that provides protection against mobile genetic elements (viruses, transposable elements and conjugative plasmids). CRISPR clusters contain spacers, sequences complementary to antecedent mobile elements, and target invading nucleic acids. CRISPR clusters are transcribed and processed into CRISPR RNA (crRNA). The polypeptide is CRISPR system aCascade subunit Cas5 1 (cas5a) (Saccharolobus solfataricus (strain ATCC 35092 / DSM 1617 / JCM 11322 / P2) (Sulfolobus solfataricus)).